Reading from the N-terminus, the 142-residue chain is Universal stress protein G (142 aa).

Belongs to the universal stress protein A family.

In Escherichia coli O157:H7, this protein is Universal stress protein G (uspG).